A 588-amino-acid polypeptide reads, in one-letter code: Aspartate--tRNA ligase (588 aa).

L-aspartate is bound at residue Glu-174. The aspartate stretch occupies residues 198-201 (QLFK). Arg-220 serves as a coordination point for L-aspartate. Residues 220-222 (RDE) and Gln-229 contribute to the ATP site. His-448 lines the L-aspartate pocket. Position 482 (Glu-482) interacts with ATP. Residue Arg-489 participates in L-aspartate binding. 534 to 537 (GLDR) is an ATP binding site.

This sequence belongs to the class-II aminoacyl-tRNA synthetase family. Type 1 subfamily. As to quaternary structure, homodimer.

It is found in the cytoplasm. The catalysed reaction is tRNA(Asp) + L-aspartate + ATP = L-aspartyl-tRNA(Asp) + AMP + diphosphate. Catalyzes the attachment of L-aspartate to tRNA(Asp) in a two-step reaction: L-aspartate is first activated by ATP to form Asp-AMP and then transferred to the acceptor end of tRNA(Asp). The sequence is that of Aspartate--tRNA ligase from Exiguobacterium sibiricum (strain DSM 17290 / CCUG 55495 / CIP 109462 / JCM 13490 / 255-15).